Consider the following 105-residue polypeptide: Cell division protein FtsB (105 aa).

At 1–3 (MGK) the chain is on the cytoplasmic side. A helical transmembrane segment spans residues 4-21 (LTLLLLVLLGWLQYSLWL). Residues 22–105 (GKNGVHDLVR…PAAPATQDNQ (84 aa)) lie on the Periplasmic side of the membrane. Residues 28–62 (DLVRVESDVAAQQSNNAQLKARNDQLFAEIDDLNG) are a coiled coil.

The protein belongs to the FtsB family. In terms of assembly, part of a complex composed of FtsB, FtsL and FtsQ.

The protein localises to the cell inner membrane. In terms of biological role, essential cell division protein. May link together the upstream cell division proteins, which are predominantly cytoplasmic, with the downstream cell division proteins, which are predominantly periplasmic. This is Cell division protein FtsB from Sodalis glossinidius (strain morsitans).